The primary structure comprises 233 residues: Ras-related protein RABA6a (233 aa).

20–27 contacts GTP; sequence GDSAVGKS. Residues 42–50 carry the Effector region motif; sequence SKPTIGVEF. GTP-binding positions include 68 to 72, 126 to 129, and 156 to 157; these read DTAGQ, NKSD, and SA. S-geranylgeranyl cysteine attachment occurs at residues cysteine 230 and cysteine 231.

It belongs to the small GTPase superfamily. Rab family.

The protein resides in the cell membrane. Its function is as follows. Intracellular vesicle trafficking and protein transport. The protein is Ras-related protein RABA6a (RABA6A) of Arabidopsis thaliana (Mouse-ear cress).